Here is an 804-residue protein sequence, read N- to C-terminus: Phenylalanine--tRNA ligase beta subunit (804 aa).

The tRNA-binding domain occupies 39 to 147; that stretch reads GPSFSNVVVA…PNLPLGEDLA (109 aa). The B5 domain maps to 402 to 480; sequence ETVGEIHLRC…RIHGYDNIPV (79 aa). Positions 458, 464, 467, and 468 each coordinate Mg(2+). An FDX-ACB domain is found at 711 to 804; the sequence is SRYPESSRDV…IIDQTGARVR (94 aa).

Belongs to the phenylalanyl-tRNA synthetase beta subunit family. Type 1 subfamily. In terms of assembly, tetramer of two alpha and two beta subunits. Mg(2+) serves as cofactor.

It localises to the cytoplasm. The catalysed reaction is tRNA(Phe) + L-phenylalanine + ATP = L-phenylalanyl-tRNA(Phe) + AMP + diphosphate + H(+). The protein is Phenylalanine--tRNA ligase beta subunit of Syntrophus aciditrophicus (strain SB).